The following is a 349-amino-acid chain: Homeobox-leucine zipper protein HOX7 (349 aa).

Residues Arg42–Arg186 are disordered. Composition is skewed to polar residues over residues Ser89–Met99 and Ser121–Val135. The homeobox DNA-binding region spans Gly150–Gln209. Residues Asp167 to Leu183 show a composition bias toward basic and acidic residues. Positions Lys208–Leu252 are leucine-zipper.

It belongs to the HD-ZIP homeobox family. Class II subfamily. In terms of assembly, homodimer. May form a heterodimer with HOX1, HOX2 or HOX3. In terms of tissue distribution, expressed in seedlings, roots, leaves, nodes, internodes, flowers and embryo.

It is found in the nucleus. Probable transcription factor that binds to the DNA sequence 5'-CAAT[GC]ATTG-3'. The polypeptide is Homeobox-leucine zipper protein HOX7 (HOX7) (Oryza sativa subsp. japonica (Rice)).